Consider the following 932-residue polypeptide: Probable serine/threonine-protein kinase clkA (932 aa).

A compositionally biased stretch (basic residues) spans 1–10 (MDRFQTKRKT). 3 disordered regions span residues 1–21 (MDRF…NNDY), 39–198 (YKNN…YGDT), and 212–562 (NDYD…TNTN). 2 stretches are compositionally biased toward low complexity: residues 11-21 (YSYNGYSNNDY) and 39-123 (YKNN…ENNY). The span at 124-143 (FQSENQSNKDQNSYFNSSYL) shows a compositional bias: polar residues. Low complexity-rich tracts occupy residues 148–196 (DNYN…NSYG), 218–305 (NNNN…NGGN), 314–342 (VFNN…NNDY), and 351–562 (NIYS…TNTN). The region spanning 590–920 (YKVLCTVGSG…ASDALSHPFL (331 aa)) is the Protein kinase domain. Residues 596–604 (VGSGTFSTV) and lysine 619 each bind ATP. Residue aspartate 719 is the Proton acceptor of the active site.

This sequence belongs to the protein kinase superfamily. CMGC Ser/Thr protein kinase family.

The enzyme catalyses L-seryl-[protein] + ATP = O-phospho-L-seryl-[protein] + ADP + H(+). It catalyses the reaction L-threonyl-[protein] + ATP = O-phospho-L-threonyl-[protein] + ADP + H(+). This is Probable serine/threonine-protein kinase clkA (clkA) from Dictyostelium discoideum (Social amoeba).